The following is a 754-amino-acid chain: 1,4-alpha-glucan branching enzyme GlgB (754 aa).

The active-site Nucleophile is Asp431. Glu484 functions as the Proton donor in the catalytic mechanism.

This sequence belongs to the glycosyl hydrolase 13 family. GlgB subfamily. Monomer.

The catalysed reaction is Transfers a segment of a (1-&gt;4)-alpha-D-glucan chain to a primary hydroxy group in a similar glucan chain.. Its pathway is glycan biosynthesis; glycogen biosynthesis. In terms of biological role, catalyzes the formation of the alpha-1,6-glucosidic linkages in glycogen by scission of a 1,4-alpha-linked oligosaccharide from growing alpha-1,4-glucan chains and the subsequent attachment of the oligosaccharide to the alpha-1,6 position. The protein is 1,4-alpha-glucan branching enzyme GlgB of Prochlorococcus marinus (strain AS9601).